Consider the following 196-residue polypeptide: Glycerol-3-phosphate acyltransferase (196 aa).

Transmembrane regions (helical) follow at residues 4–24, 80–100, 114–134, and 155–175; these read LTLL…AVVI, PFFL…PLYF, AMFP…LLVF, and AYWI…LILW.

The protein belongs to the PlsY family. As to quaternary structure, probably interacts with PlsX.

Its subcellular location is the cell inner membrane. It catalyses the reaction an acyl phosphate + sn-glycerol 3-phosphate = a 1-acyl-sn-glycero-3-phosphate + phosphate. Its pathway is lipid metabolism; phospholipid metabolism. Functionally, catalyzes the transfer of an acyl group from acyl-phosphate (acyl-PO(4)) to glycerol-3-phosphate (G3P) to form lysophosphatidic acid (LPA). This enzyme utilizes acyl-phosphate as fatty acyl donor, but not acyl-CoA or acyl-ACP. The sequence is that of Glycerol-3-phosphate acyltransferase from Idiomarina loihiensis (strain ATCC BAA-735 / DSM 15497 / L2-TR).